Here is a 363-residue protein sequence, read N- to C-terminus: Chalcone synthase B (363 aa).

C170 is a catalytic residue.

The protein belongs to the thiolase-like superfamily. Chalcone/stilbene synthases family.

The enzyme catalyses (E)-4-coumaroyl-CoA + 3 malonyl-CoA + 3 H(+) = 2',4,4',6'-tetrahydroxychalcone + 3 CO2 + 4 CoA. It participates in secondary metabolite biosynthesis; flavonoid biosynthesis. Functionally, the primary product of this enzyme is 4,2',4',6'-tetrahydroxychalcone (also termed naringenin-chalcone or chalcone) which can under specific conditions spontaneously isomerize into naringenin. The chain is Chalcone synthase B (CHSB) from Ipomoea cordatotriloba (Tievine).